The sequence spans 252 residues: Imidazole glycerol phosphate synthase subunit HisF (252 aa).

Active-site residues include D11 and D130.

Belongs to the HisA/HisF family. In terms of assembly, heterodimer of HisH and HisF.

It is found in the cytoplasm. The enzyme catalyses 5-[(5-phospho-1-deoxy-D-ribulos-1-ylimino)methylamino]-1-(5-phospho-beta-D-ribosyl)imidazole-4-carboxamide + L-glutamine = D-erythro-1-(imidazol-4-yl)glycerol 3-phosphate + 5-amino-1-(5-phospho-beta-D-ribosyl)imidazole-4-carboxamide + L-glutamate + H(+). It participates in amino-acid biosynthesis; L-histidine biosynthesis; L-histidine from 5-phospho-alpha-D-ribose 1-diphosphate: step 5/9. Its function is as follows. IGPS catalyzes the conversion of PRFAR and glutamine to IGP, AICAR and glutamate. The HisF subunit catalyzes the cyclization activity that produces IGP and AICAR from PRFAR using the ammonia provided by the HisH subunit. In Syntrophomonas wolfei subsp. wolfei (strain DSM 2245B / Goettingen), this protein is Imidazole glycerol phosphate synthase subunit HisF.